Consider the following 696-residue polypeptide: Transcriptional regulatory protein pro1 (696 aa).

The segment at 1–48 (MSTQSPNHHEDITKTSSVNMTTTTTTTKTKAAAKAGTNAAPKQKTQMH) is disordered. Positions 21-40 (TTTTTTTKTKAAAKAGTNAA) are enriched in low complexity. Positions 55–82 (CYTCRLRRKKCDEGSPMCTACKHLGLCC) form a DNA-binding region, zn(2)-C6 fungal-type. A disordered region spans residues 112–145 (LSEKSSHTIQTSINTPPGLSHSLPTSATFSDPLD). A compositionally biased stretch (polar residues) spans 118–140 (HTIQTSINTPPGLSHSLPTSATF).

Its subcellular location is the nucleus. Functionally, may be involved in fruiting body development. This Neurospora crassa (strain ATCC 24698 / 74-OR23-1A / CBS 708.71 / DSM 1257 / FGSC 987) protein is Transcriptional regulatory protein pro1 (adv-1).